Consider the following 251-residue polypeptide: Hydroxyacylglutathione hydrolase (251 aa).

His-53, His-55, Asp-57, His-58, His-110, Asp-127, and His-165 together coordinate Zn(2+).

Belongs to the metallo-beta-lactamase superfamily. Glyoxalase II family. In terms of assembly, monomer. Zn(2+) serves as cofactor.

It carries out the reaction an S-(2-hydroxyacyl)glutathione + H2O = a 2-hydroxy carboxylate + glutathione + H(+). Its pathway is secondary metabolite metabolism; methylglyoxal degradation; (R)-lactate from methylglyoxal: step 2/2. Thiolesterase that catalyzes the hydrolysis of S-D-lactoyl-glutathione to form glutathione and D-lactic acid. The sequence is that of Hydroxyacylglutathione hydrolase from Escherichia coli (strain SE11).